We begin with the raw amino-acid sequence, 2200 residues long: Bromodomain and WD repeat-containing DDB_G0285837 (2200 aa).

Disordered stretches follow at residues 137–178 (GFND…SNTN), 194–245 (VTPT…TTPP), and 259–288 (DIQQQQQQQQQQQQQTISKSKNEDINNNNN). Low complexity-rich tracts occupy residues 161–176 (NNNNNNSSSSSSSNSN), 203–242 (NTTNTTTTTTATTTTTTTTTTTNNTNVQTTPTNTTNTTLT), and 259–273 (DIQQQQQQQQQQQQQ). WD repeat units follow at residues 352–391 (GHKAPTYCLQFDKSGRLYFTGSDDHLVKVWSTYSGRLIAT), 394–433 (GHLGDITDMCTSFDNSLLATASNDNVIRIWNLNSNQYDSI), 442–483 (SVNN…HVIS), 548–586 (GKTNEITGTTMNKGGTLIVASVDSSLKIWSTLFNPPKLV), 591–630 (GHPTTILALQYSHGSDAIVSGSYDGTVIIWRHSGGPKWDH), 653–691 (RSKATFKNVIWSHDDRFIITTDYNMIRVWNSLDGSFHLE), 694–736 (EHTS…KKFV), and 741–780 (GFQCQILDGCFSPDGQKFIVTNSTGKWFMFELGLGSDINN). Composition is skewed to acidic residues over residues 918–933 (DDEIIFPSDPSDEDFN) and 955–968 (QDDDDDDDDDEDYD). Disordered regions lie at residues 918–1180 (DDEI…NHLT), 1262–1297 (NNNNNNNNNNNNNNNNNNNNNNNGVDDQQINSDDDD), 1461–1538 (ENNQ…NNNN), and 1662–1703 (NFNS…NNNN). Residues 974–1000 (MSTRKKSKIKADKRKKRLLKQSKKFTR) show a composition bias toward basic residues. Positions 1052-1074 (GEIEMDDDDQYLNDNILDSDDND) are enriched in acidic residues. Residues 1109–1132 (SSDNSSENDSSANGSDSDYSGSKS) are compositionally biased toward low complexity. Basic residues predominate over residues 1133-1164 (NKNKRGDKSKRNKKGKKNVKNKKVQKRGRKKS). 2 stretches are compositionally biased toward low complexity: residues 1262-1292 (NNNNNNNNNNNNNNNNNNNNNNNGVDDQQIN) and 1461-1525 (ENNQ…NSLN). The 102-residue stretch at 1722 to 1823 (EKIENLKKEM…HRISDILKEA (102 aa)) folds into the Bromo domain. Residues 1850–2200 (DKDDSQLDDE…RGRGRPPKSN (351 aa)) are disordered. The span at 1878–1888 (LANNNHGNNKS) shows a compositional bias: low complexity. The span at 1910–1920 (TGKNITRSLLS) shows a compositional bias: polar residues. Low complexity predominate over residues 1945–1958 (TTTTTTTTTTTSST). Acidic residues-rich tracts occupy residues 2016-2028 (DYNDDDDDDDNDG), 2057-2073 (EDEDEDDNNQEEDEEDY), and 2104-2113 (SEEEEDEDQS). Over residues 2114–2124 (DVNSNNNSDNE) the composition is skewed to low complexity. Residues 2125–2138 (SGGEDGYSGEDGSE) are compositionally biased toward acidic residues. Residues 2170-2185 (SFKNNNNNNNINNNVN) show a composition bias toward low complexity. Residues 2190–2200 (KRGRGRPPKSN) are compositionally biased toward basic residues.

The chain is Bromodomain and WD repeat-containing DDB_G0285837 from Dictyostelium discoideum (Social amoeba).